The following is a 330-amino-acid chain: DNA-directed RNA polymerase subunit alpha (330 aa).

The alpha N-terminal domain (alpha-NTD) stretch occupies residues M1 to K237. Residues F251 to E330 are alpha C-terminal domain (alpha-CTD).

This sequence belongs to the RNA polymerase alpha chain family. As to quaternary structure, homodimer. The RNAP catalytic core consists of 2 alpha, 1 beta, 1 beta' and 1 omega subunit. When a sigma factor is associated with the core the holoenzyme is formed, which can initiate transcription.

The catalysed reaction is RNA(n) + a ribonucleoside 5'-triphosphate = RNA(n+1) + diphosphate. Its function is as follows. DNA-dependent RNA polymerase catalyzes the transcription of DNA into RNA using the four ribonucleoside triphosphates as substrates. The polypeptide is DNA-directed RNA polymerase subunit alpha (Legionella pneumophila subsp. pneumophila (strain Philadelphia 1 / ATCC 33152 / DSM 7513)).